A 102-amino-acid chain; its full sequence is MSLSFLLFSPFLPPCFSSISICLSVLSTVSFFFAFTIPHYVLRCGSVDEWHIHSSAEDFRTQRCVCAVKLSASLLGCLLACASWSLLLEVSRIKWHVGTAYS.

The N-terminal stretch at 1 to 17 (MSLSFLLFSPFLPPCFS) is a signal peptide. The helical transmembrane segment at 18–38 (SISICLSVLSTVSFFFAFTIP) threads the bilayer. The Cytoplasmic segment spans residues 39 to 69 (HYVLRCGSVDEWHIHSSAEDFRTQRCVCAVK). Residues 70 to 90 (LSASLLGCLLACASWSLLLEV) traverse the membrane as a helical segment. Over 91 to 102 (SRIKWHVGTAYS) the chain is Extracellular.

It is found in the membrane. Functionally, involved in vacuolar trafficking. This is Hypersensitivity to hygromycin-B protein 1 from Saccharomyces cerevisiae (strain ATCC 204508 / S288c) (Baker's yeast).